We begin with the raw amino-acid sequence, 1391 residues long: DNA-directed RNA polymerase subunit beta' (1391 aa).

Cys70, Cys72, Cys85, and Cys88 together coordinate Zn(2+). Asp461, Asp463, and Asp465 together coordinate Mg(2+). Residues Cys809, Cys882, Cys889, and Cys892 each coordinate Zn(2+).

The protein belongs to the RNA polymerase beta' chain family. The RNAP catalytic core consists of 2 alpha, 1 beta, 1 beta' and 1 omega subunit. When a sigma factor is associated with the core the holoenzyme is formed, which can initiate transcription. Requires Mg(2+) as cofactor. Zn(2+) is required as a cofactor.

The catalysed reaction is RNA(n) + a ribonucleoside 5'-triphosphate = RNA(n+1) + diphosphate. Functionally, DNA-dependent RNA polymerase catalyzes the transcription of DNA into RNA using the four ribonucleoside triphosphates as substrates. The protein is DNA-directed RNA polymerase subunit beta' of Zymomonas mobilis subsp. mobilis (strain ATCC 31821 / ZM4 / CP4).